The chain runs to 336 residues: D-altritol 5-dehydrogenase (336 aa).

Cys-37, His-59, Glu-60, Cys-89, Cys-92, Cys-95, and Cys-103 together coordinate Zn(2+).

It belongs to the zinc-containing alcohol dehydrogenase family. Zn(2+) is required as a cofactor.

The catalysed reaction is D-altritol + NAD(+) = keto-D-tagatose + NADH + H(+). The protein operates within carbohydrate metabolism. In terms of biological role, involved in D-altritol catabolism. Catalyzes the oxidation of D-altritol to D-tagatose. The sequence is that of D-altritol 5-dehydrogenase from Agrobacterium fabrum (strain C58 / ATCC 33970) (Agrobacterium tumefaciens (strain C58)).